Consider the following 453-residue polypeptide: MGRGMSRPAPKSFHVKSFGCQMNVYDGARMAELLEAQGMHAADSADAADLVVLNTCHIREKAAEKVYSDIGRIVKKAADAEEGRARPMIAVAGCVAQAEGPEIPRRAPAVDIVVGPQAYHNLPQLVADAAEGRRALDTDMPAASKFDTLPKRRRQGPTAFLTVQEGCDKFCTYCVVPYTRGAEISRPWGAIVDEAKALVDAGAREITLLGQNVNAWTGEDDRGRTQGLDGLIRALDALPGLARIRYTTSHPNDMSDGLIAAHGEVAKLMPFLHLPVQAGSDRILKAMNRSHDAAGYLRLIERVRAARPDIAVSGDFIVGFPGETDEDFEATLAIVRAVDHAQAFSFKYSPRPGTPAASMDGQVAPAVMDERLQRLQALLNEQQHRFNLATVGKRCEVLIERDGKKPGQRIGKSPWLQSVIVEDGPAIGTLVTVDIVSAGPNSLSGALVEQKAA.

Positions 11-131 (KSFHVKSFGC…LPQLVADAAE (121 aa)) constitute an MTTase N-terminal domain. [4Fe-4S] cluster-binding residues include C20, C56, C94, C167, C171, and C174. Positions 153–385 (RRQGPTAFLT…QALLNEQQHR (233 aa)) constitute a Radical SAM core domain. Residues 388–449 (LATVGKRCEV…PNSLSGALVE (62 aa)) enclose the TRAM domain.

Belongs to the methylthiotransferase family. MiaB subfamily. Monomer. It depends on [4Fe-4S] cluster as a cofactor.

Its subcellular location is the cytoplasm. The catalysed reaction is N(6)-dimethylallyladenosine(37) in tRNA + (sulfur carrier)-SH + AH2 + 2 S-adenosyl-L-methionine = 2-methylsulfanyl-N(6)-dimethylallyladenosine(37) in tRNA + (sulfur carrier)-H + 5'-deoxyadenosine + L-methionine + A + S-adenosyl-L-homocysteine + 2 H(+). Functionally, catalyzes the methylthiolation of N6-(dimethylallyl)adenosine (i(6)A), leading to the formation of 2-methylthio-N6-(dimethylallyl)adenosine (ms(2)i(6)A) at position 37 in tRNAs that read codons beginning with uridine. The protein is tRNA-2-methylthio-N(6)-dimethylallyladenosine synthase of Rhizorhabdus wittichii (strain DSM 6014 / CCUG 31198 / JCM 15750 / NBRC 105917 / EY 4224 / RW1) (Sphingomonas wittichii).